Here is a 298-residue protein sequence, read N- to C-terminus: Possible hemolysin C (298 aa).

CBS domains are found at residues 80-141 (MVPR…QNGC) and 145-202 (LIRK…IDDE).

Belongs to the UPF0053 family. Hemolysin C subfamily.

The sequence is that of Possible hemolysin C (tlyC) from Rickettsia canadensis (strain McKiel).